We begin with the raw amino-acid sequence, 98 residues long: NADH-ubiquinone oxidoreductase chain 4L (98 aa).

3 helical membrane-spanning segments follow: residues 1–21 (MIPTYMNIMLAFTISLLGMLT), 27–47 (VASLLCLEGMMMSLFIMTTLI), and 61–81 (IILLVFAACEAAVGLALLISI).

Belongs to the complex I subunit 4L family. In terms of assembly, core subunit of respiratory chain NADH dehydrogenase (Complex I) which is composed of 45 different subunits.

The protein resides in the mitochondrion inner membrane. It catalyses the reaction a ubiquinone + NADH + 5 H(+)(in) = a ubiquinol + NAD(+) + 4 H(+)(out). Core subunit of the mitochondrial membrane respiratory chain NADH dehydrogenase (Complex I) which catalyzes electron transfer from NADH through the respiratory chain, using ubiquinone as an electron acceptor. Part of the enzyme membrane arm which is embedded in the lipid bilayer and involved in proton translocation. In Macaca nigra (Celebes black macaque), this protein is NADH-ubiquinone oxidoreductase chain 4L (MT-ND4L).